Reading from the N-terminus, the 400-residue chain is Subtilisin-like protease CPC735_047380 (400 aa).

The N-terminal stretch at methionine 1 to alanine 19 is a signal peptide. Positions alanine 20–phenylalanine 118 are excised as a propeptide. Residues serine 35 to arginine 116 enclose the Inhibitor I9 domain. The Peptidase S8 domain occupies serine 128–glutamine 400. N-linked (GlcNAc...) asparagine glycosylation is present at asparagine 153. Catalysis depends on charge relay system residues aspartate 160 and histidine 191. Residues asparagine 244 and asparagine 252 are each glycosylated (N-linked (GlcNAc...) asparagine). Serine 346 functions as the Charge relay system in the catalytic mechanism. Residue asparagine 396 is glycosylated (N-linked (GlcNAc...) asparagine).

It belongs to the peptidase S8 family.

It is found in the secreted. Secreted subtilisin-like serine protease with keratinolytic activity that contributes to pathogenicity. This Coccidioides posadasii (strain C735) (Valley fever fungus) protein is Subtilisin-like protease CPC735_047380.